A 134-amino-acid polypeptide reads, in one-letter code: D-ribose pyranase (134 aa).

The Proton donor role is filled by His20. Residues Asp28, His101, and 123–125 contribute to the substrate site; that span reads YSN.

Belongs to the RbsD / FucU family. RbsD subfamily. As to quaternary structure, homodecamer.

Its subcellular location is the cytoplasm. It catalyses the reaction beta-D-ribopyranose = beta-D-ribofuranose. The protein operates within carbohydrate metabolism; D-ribose degradation; D-ribose 5-phosphate from beta-D-ribopyranose: step 1/2. Catalyzes the interconversion of beta-pyran and beta-furan forms of D-ribose. The protein is D-ribose pyranase of Pseudomonas syringae pv. syringae (strain B728a).